The primary structure comprises 298 residues: Short-chain dehydrogenase/reductase prx6 (298 aa).

Residues Ile27, Asp70, Asn97, Tyr174, Lys178, Val208, and Thr210 each contribute to the NADP(+) site. Residue Tyr174 is the Proton acceptor of the active site. The active-site Lowers pKa of active site Tyr is the Lys178.

Belongs to the short-chain dehydrogenases/reductases (SDR) family.

The protein operates within sesquiterpene biosynthesis. Short-chain dehydrogenase/reductase; part of the gene cluster that mediates the biosynthesis of PR-toxin, a bicyclic sesquiterpene belonging to the eremophilane class and acting as a mycotoxin. The first step of the pathway is catalyzed by the aristolochene synthase which performs the cyclization of trans,trans-farnesyl diphosphate (FPP) to the bicyclic sesquiterpene aristolochene. Following the formation of aristolochene, the non-oxygenated aristolochene is converted to the trioxygenated intermediate eremofortin B, via 7-epi-neopetasone. This conversion appears to involve three enzymes, a hydroxysterol oxidase-like enzyme, the quinone-oxidase prx3 that forms the quinone-type-structure in the bicyclic nucleus of aristolochene with the C8-oxo group and the C-3 hydroxyl group, and the P450 monooxygenase prx9 that introduces the epoxide at the double bond between carbons 1 and 2. No monoxy or dioxy-intermediates have been reported to be released to the broth, so these three early oxidative reactions may be coupled together. Eremofortin B is further oxidized by another P450 monooxygenase, that introduces a second epoxide between carbons 7 and 11 prior to acetylation to eremofortin A by the acetyltransferase prx11. The second epoxidation may be performed by a second P450 monooxygenase. After the acetylation step, eremofortin A is converted to eremofortin C and then to PR-toxin. First the conversion of eremofortin A to eremofortin C proceeds by oxidation of the side chain of the molecule at C-12 and is catalyzed by the short-chain oxidoreductase prx1. The cytochrome P450 monooxygenase prx8 also plays a role in this step. The primary alcohol formed at C-12 is finally oxidized by the short-chain alcohol dehydrogenase prx4 that forms PR-toxin. This chain is Short-chain dehydrogenase/reductase prx6, found in Penicillium rubens (strain ATCC 28089 / DSM 1075 / NRRL 1951 / Wisconsin 54-1255) (Penicillium chrysogenum).